The chain runs to 423 residues: Dihydroorotase (423 aa).

Positions 60 and 62 each coordinate Zn(2+). Residues 62–64 (HFR) and Asn94 each bind substrate. Zn(2+)-binding residues include Asp151, His178, and His231. Asn277 is a binding site for substrate. Residue Asp304 coordinates Zn(2+). Asp304 is a catalytic residue. His308 is a binding site for substrate.

It belongs to the metallo-dependent hydrolases superfamily. DHOase family. Class I DHOase subfamily. It depends on Zn(2+) as a cofactor.

The enzyme catalyses (S)-dihydroorotate + H2O = N-carbamoyl-L-aspartate + H(+). Its pathway is pyrimidine metabolism; UMP biosynthesis via de novo pathway; (S)-dihydroorotate from bicarbonate: step 3/3. Its function is as follows. Catalyzes the reversible cyclization of carbamoyl aspartate to dihydroorotate. In Lactococcus lactis subsp. lactis (strain IL1403) (Streptococcus lactis), this protein is Dihydroorotase.